Reading from the N-terminus, the 141-residue chain is MESTSKFTYRGYTLEELRQMPIEKLAEIMPARQRRSLLRVFKQGTSEEHLKLLEKIRRAAKLASEGKKQPVIKTHLRDFIILPEMVGLTIHVHNGKEFVPVEITPEKIGHYLGEFALTTKKVEHGEPGLKATRSSMFVALK.

This sequence belongs to the universal ribosomal protein uS19 family.

In terms of biological role, protein S19 forms a complex with S13 that binds strongly to the 16S ribosomal RNA. The sequence is that of Small ribosomal subunit protein uS19 from Thermofilum pendens (strain DSM 2475 / Hrk 5).